The chain runs to 307 residues: Acetaldehyde dehydrogenase (307 aa).

NAD(+) is bound at residue 12-15 (SGNI). Catalysis depends on C130, which acts as the Acyl-thioester intermediate. Residues 161–169 (SVGPGTRQN) and N272 each bind NAD(+).

The protein belongs to the acetaldehyde dehydrogenase family.

It carries out the reaction acetaldehyde + NAD(+) + CoA = acetyl-CoA + NADH + H(+). This Shewanella pealeana (strain ATCC 700345 / ANG-SQ1) protein is Acetaldehyde dehydrogenase.